The sequence spans 322 residues: Digestive cysteine proteinase 1 (322 aa).

The first 16 residues, 1 to 16 (MKVVALFLFGLALAAA), serve as a signal peptide directing secretion. The propeptide at 17–105 (NPSWEEFKGK…VFTSTDAAPE (89 aa)) is activation peptide. Disulfide bonds link Cys-126–Cys-170, Cys-160–Cys-203, and Cys-262–Cys-311. Residue Cys-129 is part of the active site. Catalysis depends on residues His-269 and Asn-289.

The protein belongs to the peptidase C1 family.

Its activity is regulated as follows. Inhibited by E-64, antipain, leupeptin, heavy metal ions, iodoacetic acid, dithionitrobenzene, p-hydroxymercuri-benzoate; activated by mercaptoethanol and dithiothreitol. The protein is Digestive cysteine proteinase 1 (LCP1) of Homarus americanus (American lobster).